The chain runs to 875 residues: Alanine--tRNA ligase (875 aa).

Zn(2+)-binding residues include histidine 567, histidine 571, cysteine 669, and histidine 673.

It belongs to the class-II aminoacyl-tRNA synthetase family. It depends on Zn(2+) as a cofactor.

It is found in the cytoplasm. It catalyses the reaction tRNA(Ala) + L-alanine + ATP = L-alanyl-tRNA(Ala) + AMP + diphosphate. Catalyzes the attachment of alanine to tRNA(Ala) in a two-step reaction: alanine is first activated by ATP to form Ala-AMP and then transferred to the acceptor end of tRNA(Ala). Also edits incorrectly charged Ser-tRNA(Ala) and Gly-tRNA(Ala) via its editing domain. In Geobacter sulfurreducens (strain ATCC 51573 / DSM 12127 / PCA), this protein is Alanine--tRNA ligase.